Reading from the N-terminus, the 453-residue chain is Elongation factor 1-alpha (453 aa).

A tr-type G domain is found at 5–230 (KTHINIVVIG…DAIVEPKRPH (226 aa)). Residues 14-21 (GHVDAGKS) form a G1 region. 14–21 (GHVDAGKS) is a binding site for GTP. The interval 70 to 74 (GITID) is G2. Positions 91 to 94 (DAPG) are G3. GTP-binding positions include 91–95 (DAPGH) and 153–156 (NKMD). The interval 153 to 156 (NKMD) is G4. The segment at 194–196 (SGW) is G5.

This sequence belongs to the TRAFAC class translation factor GTPase superfamily. Classic translation factor GTPase family. EF-Tu/EF-1A subfamily. In terms of assembly, binds to actin.

The protein resides in the cytoplasm. In terms of biological role, this protein promotes the GTP-dependent binding of aminoacyl-tRNA to the A-site of ribosomes during protein biosynthesis. It is also an abundant actin filament bundling protein. In Dictyostelium discoideum (Social amoeba), this protein is Elongation factor 1-alpha (eef1a2).